The chain runs to 208 residues: Uracil phosphoribosyltransferase (208 aa).

Residues arginine 78, arginine 103, and 130-138 (DPMLATGGS) each bind 5-phospho-alpha-D-ribose 1-diphosphate. Uracil contacts are provided by residues isoleucine 193 and 198-200 (GDA). A 5-phospho-alpha-D-ribose 1-diphosphate-binding site is contributed by aspartate 199.

Belongs to the UPRTase family. Mg(2+) is required as a cofactor.

The enzyme catalyses UMP + diphosphate = 5-phospho-alpha-D-ribose 1-diphosphate + uracil. Its pathway is pyrimidine metabolism; UMP biosynthesis via salvage pathway; UMP from uracil: step 1/1. Allosterically activated by GTP. Its function is as follows. Catalyzes the conversion of uracil and 5-phospho-alpha-D-ribose 1-diphosphate (PRPP) to UMP and diphosphate. This chain is Uracil phosphoribosyltransferase, found in Roseiflexus castenholzii (strain DSM 13941 / HLO8).